Consider the following 287-residue polypeptide: Thioredoxin-related transmembrane protein 2 (287 aa).

A signal peptide spans 1–35; that stretch reads MAVLAPLLAFLYAVPGLLRWVSQPYYLLSALLSVS. Residues 36–112 are Extracellular-facing; it reads FLLVRKVPPV…ILFFRLDLRM (77 aa). The helical transmembrane segment at 113–133 threads the bilayer; that stretch reads GLLYITLCIVFLMTCKPPLYL. Topologically, residues 134 to 287 are cytoplasmic; that stretch reads GPEHIKYFSD…NEYNDSKKDQ (154 aa). Positions 135-269 constitute a Thioredoxin domain; the sequence is PEHIKYFSDK…LYQKAKKIRK (135 aa). Positions 284 to 287 match the Di-lysine motif motif; sequence KKDQ.

As to quaternary structure, monomer. Homodimer; disulfide-linked. Occurs in both reduced and oxidized monomeric form. Oxidative conditions increase homodimerization.

It localises to the endoplasmic reticulum membrane. Its subcellular location is the mitochondrion membrane. In terms of biological role, endoplasmic reticulum and mitochondria-associated protein that probably functions as a regulator of cellular redox state and thereby regulates protein post-translational modification, protein folding and mitochondrial activity. The polypeptide is Thioredoxin-related transmembrane protein 2 (tmx2) (Xenopus tropicalis (Western clawed frog)).